The following is a 540-amino-acid chain: Pentatricopeptide repeat-containing protein At1g80880, mitochondrial (540 aa).

The N-terminal 87 residues, 1-87 (MAAIVAIGRK…ETFDINLTAL (87 aa)), are a transit peptide targeting the mitochondrion. PPR repeat units lie at residues 154-184 (DQKSCDLMIWVLGNHQKFNIAWCLIRDMFNV), 188-222 (TRKAMFLMMDRYAAANDTSQAIRTFDIMDKFKHTP), 223-253 (YDEAFQGLLCALCRHGHIEKAEEFMLASKKL), 257-292 (DVEGFNVILNGWCNIWTDVTEAKRIWREMGNYCITP), 293-327 (NKDSYSHMISCFSKVGNLFDSLRLYDEMKKRGLAP), 328-362 (GIEVYNSLVYVLTREDCFDEAMKLMKKLNEEGLKP), 363-397 (DSVTYNSMIRPLCEAGKLDVARNVLATMISENLSP), 402-428 (FHAFLEAVNFEKTLEVLGQMKISDLGP), 429-463 (TEETFLLILGKLFKGKQPENALKIWAEMDRFEIVA), and 464-498 (NPALYLATIQGLLSCGWLEKAREIYSEMKSKGFVG). Positions 514–540 (VRKSKRMNLQKVGSQEGYKGQRSVDRK) are disordered.

It belongs to the PPR family. P subfamily.

The protein localises to the mitochondrion. The sequence is that of Pentatricopeptide repeat-containing protein At1g80880, mitochondrial from Arabidopsis thaliana (Mouse-ear cress).